We begin with the raw amino-acid sequence, 581 residues long: Caprolactamase subunit beta (581 aa).

Positions 41, 99, 102, and 124 each coordinate Zn(2+).

It belongs to the HyuB family. The caprolactamase is a heterotetramer composed of two alpha subunits (CapA) and two beta subunits (CapB). Zn(2+) serves as cofactor.

Activity is dependent on the presence of ATP and bicarbonate. The requirement for bicarbonate may be related to allosteric activation through conformational effects, but it is also conceivable that carboxyphosphate is formed and acts as a mediator in caprolactam activation, forming carboxy- or phospholactim. Its function is as follows. Component of a caprolactamase involved in the degradation of caprolactam, an industrial compound mainly used in the production of Nylon 6. Catalyzes the ATP-dependent hydrolysis of the caprolactam ring to form 6-aminocaproic acid (6-ACA). The beta subunit is responsible for hydrolytic lactam ring opening. The enzyme cannot use 5-oxoproline. The polypeptide is Caprolactamase subunit beta (Pseudomonas jessenii).